The following is a 319-amino-acid chain: Pyrroline-5-carboxylate reductase 1, mitochondrial (319 aa).

S2 is modified (N-acetylserine). Residues 6 to 11 (IGAGQL) and S34 each bind NADP(+). Positions 8, 10, 11, 34, 36, 56, 70, 71, and 97 each coordinate NADPH. NADP(+)-binding positions include N56, 69–72 (AVKP), and 95–97 (CAA). L-proline is bound at residue E164. NADPH is bound at residue N230. L-proline contacts are provided by A237 and T238. Phosphoserine occurs at positions 278 and 301. The segment at 294–319 (SPAGTALSPSGHTKLLPRSLAPAGKD) is disordered.

This sequence belongs to the pyrroline-5-carboxylate reductase family. In terms of assembly, homodecamer; composed of 5 homodimers. Interacts with LTO1.

The protein resides in the mitochondrion. The enzyme catalyses L-proline + NADP(+) = (S)-1-pyrroline-5-carboxylate + NADPH + 2 H(+). It carries out the reaction L-proline + NAD(+) = (S)-1-pyrroline-5-carboxylate + NADH + 2 H(+). It functions in the pathway amino-acid biosynthesis; L-proline biosynthesis; L-proline from L-glutamate 5-semialdehyde: step 1/1. With respect to regulation, subject to competitive inhibition by the reaction product proline. Subject to competitive inhibition by stearoyl coenzyme A. Functionally, oxidoreductase that catalyzes the last step in proline biosynthesis, which corresponds to the reduction of pyrroline-5-carboxylate to L-proline using NAD(P)H. At physiologic concentrations, has higher specific activity in the presence of NADH. Involved in the cellular response to oxidative stress. In Homo sapiens (Human), this protein is Pyrroline-5-carboxylate reductase 1, mitochondrial.